The primary structure comprises 162 residues: RNA pyrophosphohydrolase (162 aa).

Residues 7–149 form the Nudix hydrolase domain; the sequence is KYRPCVGIML…KKEVYKTVIE (143 aa). The Nudix box signature appears at 40–61; the sequence is GGVDDGEELEQAALRELLEEVG.

The protein belongs to the Nudix hydrolase family. RppH subfamily. Requires a divalent metal cation as cofactor.

Its function is as follows. Accelerates the degradation of transcripts by removing pyrophosphate from the 5'-end of triphosphorylated RNA, leading to a more labile monophosphorylated state that can stimulate subsequent ribonuclease cleavage. In Wolbachia sp. subsp. Drosophila simulans (strain wRi), this protein is RNA pyrophosphohydrolase.